Consider the following 130-residue polypeptide: Con-Ins G2b (130 aa).

A signal peptide spans 1 to 23; that stretch reads MTTSSYFLLVALGLLLYVRQSFS. Intrachain disulfides connect C29-C100, C41-C103, C53-C116, and C102-C107. A 4-hydroxyproline; partial modification is found at P34. The interval 54–77 is disordered; the sequence is EEEEARRGGTNDGGKKRRRASPLR. The propeptide at 59–92 is c peptide; the sequence is RRGGTNDGGKKRRRASPLRKRRRFISMLKARAKR. Residues 68–77 are compositionally biased toward basic residues; the sequence is KKRRRASPLR. At E111 the chain carries 4-carboxyglutamate; partial.

It belongs to the insulin family. In terms of assembly, heterodimer of A and B chains; disulfide-linked. Expressed by the venom gland.

It localises to the secreted. In terms of biological role, this venom insulin, from a fish-hunting cone snail, facilitates prey capture by rapidly inducing hypoglycemic shock. Intraperitoneal injection of this peptide into zebrafish lowers blood glucose with the same potency than human insulin. In vivo, when applied to water, this peptide reduces overall locomotor activity of zebrafish larvae, observed as a significant decrease in the percentage of time spent swimming and movement frequency. This is Con-Ins G2b from Conus geographus (Geography cone).